The following is a 432-amino-acid chain: Adenylosuccinate synthetase 2 (432 aa).

GTP is bound by residues 12–18 (GDEGKGR) and 40–42 (GHT). The Proton acceptor role is filled by D13. Mg(2+) contacts are provided by D13 and G40. Residues 13 to 16 (DEGK), 38 to 41 (NAGH), T128, R142, Q222, T237, and R301 contribute to the IMP site. Catalysis depends on H41, which acts as the Proton donor. Substrate is bound at residue 297–303 (VNTGRPR). Residues R303, 329–331 (KLD), and 411–413 (TTG) contribute to the GTP site.

The protein belongs to the adenylosuccinate synthetase family. Homodimer. Requires Mg(2+) as cofactor.

The protein localises to the cytoplasm. The enzyme catalyses IMP + L-aspartate + GTP = N(6)-(1,2-dicarboxyethyl)-AMP + GDP + phosphate + 2 H(+). It functions in the pathway purine metabolism; AMP biosynthesis via de novo pathway; AMP from IMP: step 1/2. In terms of biological role, plays an important role in the de novo pathway of purine nucleotide biosynthesis. Catalyzes the first committed step in the biosynthesis of AMP from IMP. In Burkholderia lata (strain ATCC 17760 / DSM 23089 / LMG 22485 / NCIMB 9086 / R18194 / 383), this protein is Adenylosuccinate synthetase 2.